The primary structure comprises 170 residues: Shikimate kinase (170 aa).

15–20 (GTGKTT) serves as a coordination point for ATP. A Mg(2+)-binding site is contributed by threonine 19. 3 residues coordinate substrate: aspartate 37, arginine 61, and glycine 82. Arginine 120 lines the ATP pocket. Arginine 138 lines the substrate pocket. Residue glutamine 154 participates in ATP binding.

This sequence belongs to the shikimate kinase family. In terms of assembly, monomer. It depends on Mg(2+) as a cofactor.

The protein localises to the cytoplasm. It carries out the reaction shikimate + ATP = 3-phosphoshikimate + ADP + H(+). Its pathway is metabolic intermediate biosynthesis; chorismate biosynthesis; chorismate from D-erythrose 4-phosphate and phosphoenolpyruvate: step 5/7. Its function is as follows. Catalyzes the specific phosphorylation of the 3-hydroxyl group of shikimic acid using ATP as a cosubstrate. The chain is Shikimate kinase from Staphylococcus epidermidis (strain ATCC 35984 / DSM 28319 / BCRC 17069 / CCUG 31568 / BM 3577 / RP62A).